A 334-amino-acid polypeptide reads, in one-letter code: N-acetyl-gamma-glutamyl-phosphate reductase (334 aa).

Residue Cys154 is part of the active site.

It belongs to the NAGSA dehydrogenase family. Type 1 subfamily.

The protein localises to the cytoplasm. The enzyme catalyses N-acetyl-L-glutamate 5-semialdehyde + phosphate + NADP(+) = N-acetyl-L-glutamyl 5-phosphate + NADPH + H(+). It functions in the pathway amino-acid biosynthesis; L-arginine biosynthesis; N(2)-acetyl-L-ornithine from L-glutamate: step 3/4. Its function is as follows. Catalyzes the NADPH-dependent reduction of N-acetyl-5-glutamyl phosphate to yield N-acetyl-L-glutamate 5-semialdehyde. This Shigella flexneri protein is N-acetyl-gamma-glutamyl-phosphate reductase.